A 108-amino-acid polypeptide reads, in one-letter code: uncharacterized protein (108 aa).

3 helical membrane-spanning segments follow: residues 24-44, 55-75, and 88-108; these read LWIT…GGLL, AHMA…YLAM, and RFEI…SIGI.

To cation A.eutrophus efflux system protein CzcD.

The protein localises to the cell membrane. This is an uncharacterized protein from Geobacillus stearothermophilus (Bacillus stearothermophilus).